A 104-amino-acid polypeptide reads, in one-letter code: Putative arsenate reductase (104 aa).

Cys-12 is an active-site residue.

The protein belongs to the ArsC family.

It carries out the reaction [glutaredoxin]-dithiol + arsenate + glutathione + H(+) = glutathionyl-S-S-[glutaredoxin] + arsenite + H2O. Reduction of arsenate [As(V)] to arsenite [As(III)]. This protein expands the substrate specificity of ArsAB pump which can extrude arsenite and antimonite to allow for arsenate pumping and resistance. In Escherichia coli (strain K12), this protein is Putative arsenate reductase (yfjU).